Reading from the N-terminus, the 204-residue chain is Signal peptidase I (204 aa).

Over 1-10 (MNLFKNFLKE) the chain is Cytoplasmic. Residues 11–30 (WGLFLLILSLLALSRIFFWS) form a helical membrane-spanning segment. Over 31 to 204 (NVRVEGHSMD…FWPITRIGTF (174 aa)) the chain is Extracellular. Catalysis depends on residues serine 38 and lysine 76.

Belongs to the peptidase S26 family.

Its subcellular location is the cell membrane. The catalysed reaction is Cleavage of hydrophobic, N-terminal signal or leader sequences from secreted and periplasmic proteins.. The protein is Signal peptidase I (lepB) of Streptococcus pneumoniae (strain ATCC BAA-255 / R6).